Consider the following 274-residue polypeptide: MLLVLDVGNTNTVLGVFEATPAENGSYTYGRLIAHWRVGTIRTQTVDEYGVLFRNLFAMGNVDFKVIHGIIISSVVPPMDTTLRSVCERYFALKPLFVEPGVKTGMPVHYDNPSEVGADRIVNSVAAFEKYGGPCISVDFGTATTFDVVSAKGEYLGGVIAPGIGISAEALFQRTARLPRVDIKRPTKVMGTNTVNSMQSGFYWGYLGLVDGILERLVEEMGGNVKIVATGGLSPLIGAGSKYIKDVDDLLTLDGLRIIWERNQSNTRKREHGK.

6 to 13 lines the ATP pocket; sequence DVGNTNTV. Residues tyrosine 110 and 117–120 contribute to the substrate site; that span reads GADR. Aspartate 119 (proton acceptor) is an active-site residue. Residue aspartate 139 participates in K(+) binding. Threonine 142 provides a ligand contact to ATP. Threonine 194 is a binding site for substrate.

It belongs to the type III pantothenate kinase family. Homodimer. It depends on NH4(+) as a cofactor. K(+) is required as a cofactor.

It is found in the cytoplasm. The catalysed reaction is (R)-pantothenate + ATP = (R)-4'-phosphopantothenate + ADP + H(+). Its pathway is cofactor biosynthesis; coenzyme A biosynthesis; CoA from (R)-pantothenate: step 1/5. Functionally, catalyzes the phosphorylation of pantothenate (Pan), the first step in CoA biosynthesis. The sequence is that of Type III pantothenate kinase from Koribacter versatilis (strain Ellin345).